A 232-amino-acid polypeptide reads, in one-letter code: MDSEARIKKIMEATGCSHDVARKAENESQGNLDLAIKIAGRKGNVLYSGGKSGLYVEERPSRKSITQYKNGILVEDKFYDFSVDDNIRLREMLEKKTFDASLLGLHGDTAEVIYTEKPDEEYRENSKAPEAKARPSFVGEGRRLGDSSREIPHVNIPDMLEIAKDGNVLFKVMIGSKRVTVRMLRSQTVGDFFDYIERYYDFGLVLSSNGKEIPPSHSVEEISNKLVLLSRR.

Positions 119–145 (DEEYRENSKAPEAKARPSFVGEGRRLG) are disordered. Basic and acidic residues predominate over residues 123-133 (RENSKAPEAKA).

This is an uncharacterized protein from Encephalitozoon cuniculi (strain GB-M1) (Microsporidian parasite).